Reading from the N-terminus, the 206-residue chain is Holliday junction branch migration complex subunit RuvA (206 aa).

The interval 1 to 64 (MIGRLHGIII…EDAQLLYGFN (64 aa)) is domain I. Residues 65–143 (TRQERTLFRE…GWISHDLFTP (79 aa)) form a domain II region. The tract at residues 144–157 (YTDAAPVDHEPSLA) is flexible linker. Residues 158–206 (PADTVESEAVAALLALGYKPQQASLVVSKVIKPEMTVENVIREALRSML) form a domain III region.

Belongs to the RuvA family. As to quaternary structure, homotetramer. Forms an RuvA(8)-RuvB(12)-Holliday junction (HJ) complex. HJ DNA is sandwiched between 2 RuvA tetramers; dsDNA enters through RuvA and exits via RuvB. An RuvB hexamer assembles on each DNA strand where it exits the tetramer. Each RuvB hexamer is contacted by two RuvA subunits (via domain III) on 2 adjacent RuvB subunits; this complex drives branch migration. In the full resolvosome a probable DNA-RuvA(4)-RuvB(12)-RuvC(2) complex forms which resolves the HJ.

The protein resides in the cytoplasm. The RuvA-RuvB-RuvC complex processes Holliday junction (HJ) DNA during genetic recombination and DNA repair, while the RuvA-RuvB complex plays an important role in the rescue of blocked DNA replication forks via replication fork reversal (RFR). RuvA specifically binds to HJ cruciform DNA, conferring on it an open structure. The RuvB hexamer acts as an ATP-dependent pump, pulling dsDNA into and through the RuvAB complex. HJ branch migration allows RuvC to scan DNA until it finds its consensus sequence, where it cleaves and resolves the cruciform DNA. In Tolumonas auensis (strain DSM 9187 / NBRC 110442 / TA 4), this protein is Holliday junction branch migration complex subunit RuvA.